Here is a 156-residue protein sequence, read N- to C-terminus: Oxidized purine nucleoside triphosphate hydrolase (156 aa).

One can recognise a Nudix hydrolase domain in the interval 3–132 (TSRLYTLVLV…WFPLLLQKKK (130 aa)). Residue Thr8 participates in 2-oxo-dATP binding. Residues Thr8, Lys23, Asn33, 35–38 (FGGK), and Glu52 each bind 8-oxo-dGTP. 2-oxo-dATP is bound by residues Asn33 and 35–38 (FGGK). Residues Gly36, Glu52, Glu55, Glu56, and Glu100 each contribute to the Mg(2+) site. The short motif at 37–58 (GKVQEGETIEDGAKRELLEESG) is the Nudix box element. Residues Glu56, Glu100, and 117 to 120 (WPDD) each bind 8-oxo-dGTP. 2-oxo-dATP is bound at residue 117–120 (WPDD).

Belongs to the Nudix hydrolase family. Monomer. The cofactor is Mg(2+). As to expression, high expression levels detected in thymus, liver, spleen, kidney, testis and large intestine, with lower levels detected in brain, heart, lung and stomach (at protein level). Expressed in kidney, liver and small intestine.

The protein localises to the cytoplasm. Its subcellular location is the nucleus. It is found in the nucleus membrane. The protein resides in the cytoplasmic vesicle. It localises to the secretory vesicle. The protein localises to the acrosome. It carries out the reaction 2-oxo-dATP + H2O = 2-oxo-dAMP + diphosphate + H(+). It catalyses the reaction 2-oxo-ATP + H2O = 2-oxo-AMP + diphosphate + H(+). The catalysed reaction is 8-oxo-dGTP + H2O = 8-oxo-dGMP + diphosphate + H(+). The enzyme catalyses 8-oxo-dATP + H2O = 8-oxo-dAMP + diphosphate + H(+). It carries out the reaction O(6)-methyl-dGTP + H2O = O(6)-methyl-dGMP + diphosphate + H(+). It catalyses the reaction N(6)-methyl-dATP + H2O = N(6)-methyl-dAMP + diphosphate + H(+). The catalysed reaction is N(6)-methyl-ATP + H2O = N(6)-methyl-AMP + diphosphate + H(+). Its function is as follows. Oxidized purine nucleoside triphosphate hydrolase which is a prominent sanitizer of the oxidized nucleotide pool. Catalyzes the hydrolysis of 2-oxo-dATP (2-hydroxy-dATP) into 2-oxo-dAMP. Also has a significant hydrolase activity toward 2-oxo-ATP, 8-oxo-dGTP and 8-oxo-dATP. Through the hydrolysis of oxidized purine nucleoside triphosphates, prevents their incorporation into DNA and the subsequent transversions A:T to C:G and G:C to T:A. Also catalyzes the hydrolysis of methylated purine nucleoside triphosphate preventing their integration into DNA. Through this antimutagenic activity protects cells from oxidative stress. The protein is Oxidized purine nucleoside triphosphate hydrolase (Nudt1) of Mus musculus (Mouse).